The following is a 318-amino-acid chain: MNISNKVPFKFSLEVKEALESGKPVVALESNVITHGLDYPDNVTTAKNVEQAVRESGAIPATIGIDKGEFLIGMSDEQIEKFATASHVPKVTSRDIPVVLASGGMGATTVASSILAAEIAGIKFFCSAGIGGVHRGAETSMDISADLTQLTRSRVAVVCAGAKNILDIGLTLEFLETWNVPVISYQSDDFPAFYCRSSGFKSPQRLDELAVIAKAIEINWMLPGGKGVLITTPTKPEDALDNQKIDIIIQEAVLEAKKKNIVGNSLTKYLMRMVDRETDGISAKANMAVLVNTAEVAGKLAVAACLQSSTFFARIKSQ.

Glutamate 29 acts as the Proton donor in catalysis. 2 residues coordinate substrate: lysine 90 and valine 110. Aspartate 142 is a Mn(2+) binding site. Substrate is bound at residue 144–146 (SAD). The Nucleophile role is filled by lysine 163.

The protein belongs to the pseudouridine-5'-phosphate glycosidase family. Homotrimer. Mn(2+) is required as a cofactor.

It carries out the reaction D-ribose 5-phosphate + uracil = psi-UMP + H2O. In terms of biological role, catalyzes the reversible cleavage of pseudouridine 5'-phosphate (PsiMP) to ribose 5-phosphate and uracil. Functions biologically in the cleavage direction, as part of a pseudouridine degradation pathway. This is Pseudouridine-5'-phosphate glycosidase 1 from Photorhabdus laumondii subsp. laumondii (strain DSM 15139 / CIP 105565 / TT01) (Photorhabdus luminescens subsp. laumondii).